A 219-amino-acid polypeptide reads, in one-letter code: MDQLEMKKMAAQAALQFVQPDSIVGVGSGSTVNCFIEALGAMRDQIKGAVAASKASEELLRKQGIEVFSANDVSSLDIYVDGADEINPQKMMIKGGGAALTREKIVASLTKNFICIVDSSKQVDVLGSTFPLPVEVIPMARSQVARKLVALGGSPEWRQGVVTDNGNVILDVHNFPIMNPPEMEKELNNVAGVVTNGIFALNAANTVIVGTPEGAKIIK.

Residues 28-31, 81-84, and 94-97 contribute to the substrate site; these read SGST, DGAD, and KGGG. Glutamate 103 functions as the Proton acceptor in the catalytic mechanism. Lysine 121 contacts substrate.

Belongs to the ribose 5-phosphate isomerase family. As to quaternary structure, homodimer.

It catalyses the reaction aldehydo-D-ribose 5-phosphate = D-ribulose 5-phosphate. It participates in carbohydrate degradation; pentose phosphate pathway; D-ribose 5-phosphate from D-ribulose 5-phosphate (non-oxidative stage): step 1/1. In terms of biological role, catalyzes the reversible conversion of ribose-5-phosphate to ribulose 5-phosphate. This is Ribose-5-phosphate isomerase A from Actinobacillus succinogenes (strain ATCC 55618 / DSM 22257 / CCUG 43843 / 130Z).